Here is a 418-residue protein sequence, read N- to C-terminus: F-box protein At5g03970 (418 aa).

Residues 18–66 (STHEVLNSNDTMCEILILLPPETIYKLILVSKRWLEIIASPCFRHTYLA) enclose the F-box domain.

The protein is F-box protein At5g03970 of Arabidopsis thaliana (Mouse-ear cress).